The sequence spans 391 residues: Multidrug resistance protein MdtL (391 aa).

The next 12 helical transmembrane spans lie at 4 to 24, 42 to 62, 69 to 89, 93 to 113, 131 to 151, 158 to 178, 203 to 222, 245 to 265, 269 to 289, 293 to 313, 324 to 346, and 363 to 383; these read FLIC…MYLV, IAFS…GKVA, PVAI…SLAE, LFLA…VVAF, LLNG…HLIM, SLFW…LFIL, FFLS…LTFV, ALTA…LGIF, TLMI…AVSP, ISLF…GVAM, AGVA…IWLA, and ACSI…PVAA.

It belongs to the major facilitator superfamily. DHA1 family. MdtL (TC 2.A.1.2.22) subfamily.

It is found in the cell inner membrane. Confers resistance to chloramphenicol. The protein is Multidrug resistance protein MdtL of Escherichia fergusonii (strain ATCC 35469 / DSM 13698 / CCUG 18766 / IAM 14443 / JCM 21226 / LMG 7866 / NBRC 102419 / NCTC 12128 / CDC 0568-73).